Consider the following 174-residue polypeptide: Secreted cysteine-rich protein UMAG_00792 (174 aa).

The first 26 residues, Met-1–Ala-26, serve as a signal peptide directing secretion. Residue Asn-77 is glycosylated (N-linked (GlcNAc...) asparagine).

As to quaternary structure, secreted cysteine-rich proteins (SCRPs) are predicted to form amyloids.

It localises to the secreted. Secreted cysteine-rich protein that might form amyloid strutures which are involved in attachment to hydrophobic surfaces and in formation of hydrophobic aerial hyphae. The polypeptide is Secreted cysteine-rich protein UMAG_00792 (Mycosarcoma maydis (Corn smut fungus)).